A 240-amino-acid chain; its full sequence is Methylthioribulose-1-phosphate dehydratase (240 aa).

Residue Cys99 participates in substrate binding. Zn(2+) is bound by residues His116 and His118. Glu145 functions as the Proton donor/acceptor in the catalytic mechanism. A Zn(2+)-binding site is contributed by His201.

Belongs to the aldolase class II family. MtnB subfamily. The cofactor is Zn(2+).

It is found in the cytoplasm. The catalysed reaction is 5-(methylsulfanyl)-D-ribulose 1-phosphate = 5-methylsulfanyl-2,3-dioxopentyl phosphate + H2O. It functions in the pathway amino-acid biosynthesis; L-methionine biosynthesis via salvage pathway; L-methionine from S-methyl-5-thio-alpha-D-ribose 1-phosphate: step 2/6. Catalyzes the dehydration of methylthioribulose-1-phosphate (MTRu-1-P) into 2,3-diketo-5-methylthiopentyl-1-phosphate (DK-MTP-1-P). The protein is Methylthioribulose-1-phosphate dehydratase of Ajellomyces capsulatus (strain G186AR / H82 / ATCC MYA-2454 / RMSCC 2432) (Darling's disease fungus).